The chain runs to 198 residues: DNA polymerase zeta subunit 2 (198 aa).

An HORMA domain is found at 4-196 (EIKADIIVEA…DLGLKMDVLI (193 aa)).

The protein belongs to the MAD2 family. Accessory subunit of the zeta DNA polymerase complex, which consists of the catalytic component PolZ1/DNApol-zeta and PolZ2/Rev7. Interacts with the apurinic/apyrimidinic (AP) endonuclease Rrp1 (via the N-terminus).

Functionally, as the accessory component of the DNA polymerase zeta complex, involved in translesion DNA synthesis (TLS) and various DNA repair mechanisms. Promotes the apurinic/apyrimidinic (AP) endonuclease activity of Rrp1 and is therefore likely to be involved in the base excision repair (BER) pathway responsible for repair of DNA lesions. It does not appear to influence the synthesis activity of the catalytic component Dmpol-zeta. This chain is DNA polymerase zeta subunit 2, found in Drosophila melanogaster (Fruit fly).